Here is a 579-residue protein sequence, read N- to C-terminus: F-box protein At5g39450 (579 aa).

Positions 16–62 constitute an F-box domain; it reads TCLLLSLPEDVIAVIARFVSPRDICNLSLCCKSLCDVVDSERIWLVQ.

The chain is F-box protein At5g39450 from Arabidopsis thaliana (Mouse-ear cress).